We begin with the raw amino-acid sequence, 674 residues long: Secretin GspD (674 aa).

A signal peptide spans 1-24 (MKYWLKKSSWLLAGSLLSTPLAMA). An N0 region spans residues 25–121 (NEFSASFKGT…VLSGEERANG (97 aa)). Residues 123–187 (EVITQVVAVK…EIIRRVDQAG (65 aa)) are N1. Positions 188 to 261 (DKEIEVVELN…LIKQLDVEMA (74 aa)) are N2. The N3 stretch occupies residues 264–338 (GNNRVVYLKY…AMLEVIGQLD (75 aa)). The segment at 343–612 (QVLIEALIVE…VFIKPTIIRD (270 aa)) is secretin. A cap gate region spans residues 395–417 (DTTQTKAVYDTNNNFLRNETTTT). Residues 614 to 674 (VTADGITQRK…AFIEQMEAKQ (61 aa)) form a s domain region.

It belongs to the bacterial secretin family. GSP D subfamily. Forms a cylindrical channel with 15 subunits; unlike E.coli no 16-subunit channels are seen. The closed pentadeacameric channels are 195 Angstroms long and 145 Angstroms in diameter. Each subunit turns in a clock-wise manner around the channel.

It is found in the cell outer membrane. Involved in a type II secretion system (T2SS, formerly general secretion pathway, GSP) for the export of proteins. Required for secretion of cholera toxin through the outer membrane. This subunit forms the outer membrane channel. This is Secretin GspD (epsD) from Vibrio cholerae serotype O1 (strain ATCC 39315 / El Tor Inaba N16961).